The sequence spans 388 residues: Succinate--CoA ligase [ADP-forming] subunit beta (388 aa).

Residues 9–244 (KELFRTYGIP…TDEEDPLEVE (236 aa)) enclose the ATP-grasp domain. ATP is bound by residues K46, 53–55 (GRG), E99, V102, and E107. Residues N199 and D213 each contribute to the Mg(2+) site. Substrate is bound by residues N264 and 321-323 (GIL).

The protein belongs to the succinate/malate CoA ligase beta subunit family. Heterotetramer of two alpha and two beta subunits. The cofactor is Mg(2+).

It carries out the reaction succinate + ATP + CoA = succinyl-CoA + ADP + phosphate. The enzyme catalyses GTP + succinate + CoA = succinyl-CoA + GDP + phosphate. The protein operates within carbohydrate metabolism; tricarboxylic acid cycle; succinate from succinyl-CoA (ligase route): step 1/1. Functionally, succinyl-CoA synthetase functions in the citric acid cycle (TCA), coupling the hydrolysis of succinyl-CoA to the synthesis of either ATP or GTP and thus represents the only step of substrate-level phosphorylation in the TCA. The beta subunit provides nucleotide specificity of the enzyme and binds the substrate succinate, while the binding sites for coenzyme A and phosphate are found in the alpha subunit. This Desulfosudis oleivorans (strain DSM 6200 / JCM 39069 / Hxd3) (Desulfococcus oleovorans) protein is Succinate--CoA ligase [ADP-forming] subunit beta.